A 153-amino-acid chain; its full sequence is Pheromone-binding protein Gp-9 (153 aa).

Positions 1 to 19 (MKTFVLHIFIFAFVAFASA) are cleaved as a signal peptide. Disulfide bonds link Cys-37-Cys-77, Cys-73-Cys-129, and Cys-118-Cys-138.

This sequence belongs to the PBP/GOBP family. In terms of assembly, homodimer.

It localises to the secreted. Colony queen number, a major feature of social organization, is associated with worker genotype for Gp-9. Colonies are headed by either a single reproductive queen (monogyne form) or multiple queens (polygyne form). Differences in worker Gp-9 genotypes between social forms may cause differences in workers' abilities to recognize queens and regulate their numbers. The protein is Pheromone-binding protein Gp-9 of Solenopsis amblychila (Desert fire ant).